Reading from the N-terminus, the 74-residue chain is Protein krueppel (74 aa).

4 C2H2-type zinc fingers span residues 1-4, 10-32, 38-60, and 66-74; these read ERTH, FECP…MRLH, YHCS…LRVH, and YACELCDAR.

This sequence belongs to the krueppel C2H2-type zinc-finger protein family.

Its subcellular location is the nucleus. In terms of biological role, krueppel is a gap class segmentation protein. The chain is Protein krueppel (Kr) from Psychoda cinerea (Psychod fly).